The chain runs to 583 residues: uncharacterized protein (583 aa).

A compositionally biased stretch (polar residues) spans 1–38 (MGQGESIPSRQIQRDASMQAVSSESENINDSDRQNSGF). Disordered regions lie at residues 1–39 (MGQG…SGFS), 53–124 (GLRR…AIPQ), 156–197 (TQNN…TAIG), and 362–452 (NSGS…QTDH). Residues 70 to 80 (GNRDRTTERSA) are compositionally biased toward basic and acidic residues. Low complexity predominate over residues 88–102 (SLLNRNSPSLRSLSP). Polar residues-rich tracts occupy residues 156 to 165 (TQNNQSTLAS), 172 to 191 (VSSS…NLES), 384 to 408 (LISS…NENV), and 420 to 452 (ASTA…QTDH). The RING-type zinc-finger motif lies at 525 to 568 (CLVCLSNFELNDECRRLKQCNHFFHRECIDQWLTSSQNSCPLCR). S580 bears the Phosphoserine mark.

It is found in the membrane. This is an uncharacterized protein from Schizosaccharomyces pombe (strain 972 / ATCC 24843) (Fission yeast).